A 316-amino-acid polypeptide reads, in one-letter code: Acetylglutamate kinase (316 aa).

Substrate-binding positions include Gly-76 to Gly-77, Arg-98, and Asn-207.

This sequence belongs to the acetylglutamate kinase family. ArgB subfamily.

The protein resides in the cytoplasm. It carries out the reaction N-acetyl-L-glutamate + ATP = N-acetyl-L-glutamyl 5-phosphate + ADP. The protein operates within amino-acid biosynthesis; L-arginine biosynthesis; N(2)-acetyl-L-ornithine from L-glutamate: step 2/4. In terms of biological role, catalyzes the ATP-dependent phosphorylation of N-acetyl-L-glutamate. This chain is Acetylglutamate kinase, found in Paenarthrobacter aurescens (strain TC1).